The sequence spans 205 residues: Urease accessory protein UreG 1 (205 aa).

14–21 (GPVGSGKT) contributes to the GTP binding site.

This sequence belongs to the SIMIBI class G3E GTPase family. UreG subfamily. In terms of assembly, homodimer. UreD, UreF and UreG form a complex that acts as a GTP-hydrolysis-dependent molecular chaperone, activating the urease apoprotein by helping to assemble the nickel containing metallocenter of UreC. The UreE protein probably delivers the nickel.

The protein localises to the cytoplasm. Functionally, facilitates the functional incorporation of the urease nickel metallocenter. This process requires GTP hydrolysis, probably effectuated by UreG. The polypeptide is Urease accessory protein UreG 1 (Methylobacterium radiotolerans (strain ATCC 27329 / DSM 1819 / JCM 2831 / NBRC 15690 / NCIMB 10815 / 0-1)).